We begin with the raw amino-acid sequence, 614 residues long: UvrABC system protein C (614 aa).

A GIY-YIG domain is found at 12–91; that stretch reads ESPGVYLMKG…IKKHRPRYNL (80 aa). The UVR domain occupies 201–236; that stretch reads RDLLKTYRERMASAAANERYEEAARYRDLIRAIEVT.

It belongs to the UvrC family. In terms of assembly, interacts with UvrB in an incision complex.

It is found in the cytoplasm. The UvrABC repair system catalyzes the recognition and processing of DNA lesions. UvrC both incises the 5' and 3' sides of the lesion. The N-terminal half is responsible for the 3' incision and the C-terminal half is responsible for the 5' incision. The polypeptide is UvrABC system protein C (Geobacter metallireducens (strain ATCC 53774 / DSM 7210 / GS-15)).